The following is a 455-amino-acid chain: Epoxide hydrolase 1 (455 aa).

Residues 1–21 (MWLELILASVLGFVIYWFVSR) traverse the membrane as a helical; Signal-anchor for type III membrane protein segment. At 22–455 (DKEETLPLED…RKFVSLAELQ (434 aa)) the chain is on the cytoplasmic side. The active-site Nucleophile is the Asp-226. The residue at position 295 (Arg-295) is a Dimethylated arginine. Catalysis depends on Tyr-374, which acts as the Proton donor. His-431 acts as the Proton acceptor in catalysis. The residue at position 439 (Lys-439) is an N6-acetyllysine.

It belongs to the peptidase S33 family.

The protein localises to the microsome membrane. It is found in the endoplasmic reticulum membrane. The enzyme catalyses cis-stilbene oxide + H2O = (1R,2R)-hydrobenzoin. It carries out the reaction 1-(4-methoxyphenyl)-N-methyl-N-[(3-methyloxetan-3-yl)methyl]methanamine + H2O = 2-{[(4-methoxybenzyl)(methyl)amino]methyl}-2-methylpropane-1,3-diol. The catalysed reaction is 8,9-epoxy-(5Z,11Z,14Z)-eicosatrienoate + H2O = 8,9-dihydroxy-(5Z,11Z,14Z)-eicosatrienoate. It catalyses the reaction 11,12-epoxy-(5Z,8Z,14Z)-eicosatrienoate + H2O = 11,12-dihydroxy-(5Z,8Z,14Z)-eicosatrienoate. The enzyme catalyses 2-(5Z,8Z,11Z,14Z-eicosatetraenoyl)-glycerol + H2O = glycerol + (5Z,8Z,11Z,14Z)-eicosatetraenoate + H(+). Inhibited by 10-hydroxystearamide and methoxy-arachidonyl fluorophosphate. Its function is as follows. Biotransformation enzyme that catalyzes the hydrolysis of arene and aliphatic epoxides to less reactive and more water soluble dihydrodiols by the trans addition of water. May play a role in the metabolism of endogenous lipids such as epoxide-containing fatty acids. Metabolizes the abundant endocannabinoid 2-arachidonoylglycerol (2-AG) to free arachidonic acid (AA) and glycerol. Binds 20(S)-hydroxycholesterol (20(S)-OHC). In Mus musculus (Mouse), this protein is Epoxide hydrolase 1.